Here is a 598-residue protein sequence, read N- to C-terminus: Movement protein Hsp70h (598 aa).

Belongs to the heat shock protein 70 family. Homomultimer. Interacts with p20. This interaction allows the docking of the latter to the virion.

Its subcellular location is the virion. The protein resides in the host cell junction. It localises to the host plasmodesma. Its function is as follows. Transports viral genome to neighboring plant cells directly through plasmosdesmata, without any budding. The movement protein allows efficient cell to cell propagation, by bypassing the host cell wall barrier. Two movement proteins, p6, Hsp70h and three structural proteins, CP, CPm, and P64 are essential for cell-cell movement. Also plays a role in virion formation. Together with CPm and p64, encapsidates the 5'-terminal portion of the viral genome. The polypeptide is Movement protein Hsp70h (Beta vulgaris (Sugar beet)).